The primary structure comprises 359 residues: Guanine nucleotide-binding protein subunit alpha-11 (359 aa).

S-palmitoyl cysteine attachment occurs at residues cysteine 9 and cysteine 10. One can recognise a G-alpha domain in the interval 38 to 359; sequence RELKLLLLGT…QHNLKEYNLV (322 aa). The segment at 41–54 is G1 motif; the sequence is KLLLLGTGESGKST. GTP is bound by residues 46–53 and 180–183; these read GTGESGKS and LRVR. Serine 53 is a Mg(2+) binding site. Residues 178-186 are G2 motif; the sequence is DVLRVRVPT. Threonine 186 contributes to the Mg(2+) binding site. Positions 201–210 are G3 motif; the sequence is FRMVDVGGQR. The G4 motif stretch occupies residues 270–277; the sequence is ILFLNKKD. GTP-binding positions include 274-277 and alanine 331; that span reads NKKD. The tract at residues 329–334 is G5 motif; it reads TCATDT.

This sequence belongs to the G-alpha family. G(q) subfamily. In terms of assembly, g proteins are composed of 3 units; alpha, beta and gamma. The alpha chain contains the guanine nucleotide binding site.

The protein resides in the cell membrane. It is found in the cytoplasm. The enzyme catalyses GTP + H2O = GDP + phosphate + H(+). Functionally, guanine nucleotide-binding proteins (G proteins) function as transducers downstream of G protein-coupled receptors (GPCRs) in numerous signaling cascades. The alpha chain contains the guanine nucleotide binding site and alternates between an active, GTP-bound state and an inactive, GDP-bound state. Signaling by an activated GPCR promotes GDP release and GTP binding. The alpha subunit has a low GTPase activity that converts bound GTP to GDP, thereby terminating the signal. Both GDP release and GTP hydrolysis are modulated by numerous regulatory proteins. Signaling is mediated via phospholipase C-beta-dependent inositol lipid hydrolysis for signal propagation: activates phospholipase C-beta: following GPCR activation, GNA11 activates PLC-beta (PLCB1, PLCB2, PLCB3 or PLCB4), leading to production of diacylglycerol (DAG) and inositol 1,4,5-trisphosphate (IP3). The polypeptide is Guanine nucleotide-binding protein subunit alpha-11 (gna11) (Xenopus laevis (African clawed frog)).